A 315-amino-acid chain; its full sequence is MDLRQFLMCLSLCTAFALSKPTEKKDRVHHEPQLSDKVHNDAQNFDYDHDAFLGAEEAKSFGQLTPEESKEKLGMIVDKIDTDKDGFVTEGELKSRIKHAQKKYIYDNVENQWQEFDMNQDGLISWDEYRNVTYGTYLDDPDPDDGFNYKPIMVRDERRFKMADQDGDLIATKEEFTAFLHPEEYDYMKDIVLQETMEDIDQNADGFIDLEEYIGDMYSHDGNADEPQWVKTEREQFVEFRDKNRDGKMDKEETKDWILPSDYDHAEAEARHLVYESDQDKDGKLTKEEIVDKYDLFVGSQATDFGEALVRHDEF.

A signal peptide spans 1-19 (MDLRQFLMCLSLCTAFALS). Phosphotyrosine is present on tyrosine 47. Threonine 65 is modified (phosphothreonine). 6 consecutive EF-hand domains span residues 68 to 103 (ESKEKLGMIVDKIDTDKDGFVTEGELKSRIKHAQKK), 104 to 139 (YIYDNVENQWQEFDMNQDGLISWDEYRNVTYGTYLD), 151 to 186 (PIMVRDERRFKMADQDGDLIATKEEFTAFLHPEEYD), 188 to 223 (MKDIVLQETMEDIDQNADGFIDLEEYIGDMYSHDGN), 229 to 264 (WVKTEREQFVEFRDKNRDGKMDKEETKDWILPSDYD), and 265 to 300 (HAEAEARHLVYESDQDKDGKLTKEEIVDKYDLFVGS). Residue serine 69 is modified to Phosphoserine. 8 residues coordinate Ca(2+): aspartate 81, aspartate 83, aspartate 85, glutamate 92, aspartate 117, asparagine 119, aspartate 121, and glutamate 128. An N-linked (GlcNAc...) asparagine glycan is attached at asparagine 131. Residues aspartate 164, aspartate 166, aspartate 168, glutamate 175, aspartate 201, asparagine 203, aspartate 205, glutamate 212, aspartate 242, asparagine 244, aspartate 246, lysine 248, and glutamate 253 each coordinate Ca(2+). Threonine 254 is subject to Phosphothreonine. Phosphoserine occurs at positions 261 and 277. Ca(2+) is bound by residues aspartate 278, aspartate 280, aspartate 282, lysine 284, and glutamate 289. Positions 312-315 (HDEF) match the Prevents secretion from ER motif.

It belongs to the CREC family. In terms of assembly, binds crotoxin. Interacts with GGCX.

It localises to the endoplasmic reticulum membrane. Its subcellular location is the golgi apparatus. The protein localises to the secreted. It is found in the melanosome. The protein resides in the sarcoplasmic reticulum lumen. Involved in regulation of vitamin K-dependent carboxylation of multiple N-terminal glutamate residues. Seems to inhibit gamma-carboxylase GGCX. Binds 7 calcium ions with a low affinity. The sequence is that of Calumenin (Calu) from Rattus norvegicus (Rat).